A 163-amino-acid chain; its full sequence is Phosphopantetheine adenylyltransferase (163 aa).

Ser-11 provides a ligand contact to substrate. Residues 11–12 and His-19 each bind ATP; that span reads SF. Lys-43, Ala-76, and Arg-90 together coordinate substrate. ATP contacts are provided by residues 91–93, Glu-101, and 126–132; these read GLR and WQALSSS.

Belongs to the bacterial CoaD family. In terms of assembly, homohexamer. Mg(2+) is required as a cofactor.

Its subcellular location is the cytoplasm. It catalyses the reaction (R)-4'-phosphopantetheine + ATP + H(+) = 3'-dephospho-CoA + diphosphate. It participates in cofactor biosynthesis; coenzyme A biosynthesis; CoA from (R)-pantothenate: step 4/5. Its function is as follows. Reversibly transfers an adenylyl group from ATP to 4'-phosphopantetheine, yielding dephospho-CoA (dPCoA) and pyrophosphate. The chain is Phosphopantetheine adenylyltransferase from Streptococcus pyogenes serotype M6 (strain ATCC BAA-946 / MGAS10394).